The primary structure comprises 209 residues: Ribosomal RNA large subunit methyltransferase E (209 aa).

5 residues coordinate S-adenosyl-L-methionine: glycine 60, tryptophan 62, aspartate 80, aspartate 96, and aspartate 121. Residue lysine 161 is the Proton acceptor of the active site. The segment covering 182–196 has biased composition (basic and acidic residues); it reads VQMRKPSSSRDRSRE. Positions 182 to 209 are disordered; the sequence is VQMRKPSSSRDRSREQYLLGRGFRGRSE.

Belongs to the class I-like SAM-binding methyltransferase superfamily. RNA methyltransferase RlmE family.

The protein resides in the cytoplasm. The enzyme catalyses uridine(2552) in 23S rRNA + S-adenosyl-L-methionine = 2'-O-methyluridine(2552) in 23S rRNA + S-adenosyl-L-homocysteine + H(+). In terms of biological role, specifically methylates the uridine in position 2552 of 23S rRNA at the 2'-O position of the ribose in the fully assembled 50S ribosomal subunit. This chain is Ribosomal RNA large subunit methyltransferase E, found in Pseudomonas fluorescens (strain ATCC BAA-477 / NRRL B-23932 / Pf-5).